A 507-amino-acid polypeptide reads, in one-letter code: ATP synthase subunit alpha, chloroplastic (507 aa).

170–177 (GDRQTGKT) lines the ATP pocket.

It belongs to the ATPase alpha/beta chains family. In terms of assembly, F-type ATPases have 2 components, CF(1) - the catalytic core - and CF(0) - the membrane proton channel. CF(1) has five subunits: alpha(3), beta(3), gamma(1), delta(1), epsilon(1). CF(0) has four main subunits: a, b, b' and c.

Its subcellular location is the plastid. The protein resides in the chloroplast thylakoid membrane. It carries out the reaction ATP + H2O + 4 H(+)(in) = ADP + phosphate + 5 H(+)(out). Its function is as follows. Produces ATP from ADP in the presence of a proton gradient across the membrane. The alpha chain is a regulatory subunit. The sequence is that of ATP synthase subunit alpha, chloroplastic from Sorghum bicolor (Sorghum).